Consider the following 458-residue polypeptide: 5-hydroxytryptamine receptor 2C (458 aa).

Residues 1-32 (MVNLRNAVHSFLVHLIGLLVWQCDISVSPVAA) form the signal peptide. Topologically, residues 33 to 55 (IVTDIFNTSDGGRFKFPDGVQNW) are extracellular. The helical transmembrane segment at 56–80 (PALSIVVIIIMTIGGNILVIMAVSM) threads the bilayer. At 81 to 86 (EKKLHN) the chain is on the cytoplasmic side. The chain crosses the membrane as a helical span at residues 87-111 (ATNYFLMSLAIADMLVGLLVMPLSL). Residues 112 to 128 (LAILYDYVWPLPRYLCP) lie on the Extracellular side of the membrane. A disulfide bond links C127 and C207. A helical membrane pass occupies residues 129-151 (VWISLDVLFSTASIMHLCAISLD). Ergotamine is bound at residue T139. A DRY motif; important for ligand-induced conformation changes motif is present at residues 151 to 153 (DRY). Residues 152–167 (RYVAIRNPIEHSRFNS) are Cytoplasmic-facing. The helical transmembrane segment at 168–189 (RTKAIMKIAIVWAISIGVSVPI) threads the bilayer. At 190–213 (PVIGLRDERKVFVNNTTCVLNDPN) the chain is on the extracellular side. L209 serves as a coordination point for ergotamine. A helical membrane pass occupies residues 214 to 236 (FVLIGSFVAFFIPLTIMVITYCL). Over 237-311 (TIYVLRRQAL…AINNERKASK (75 aa)) the chain is Cytoplasmic. Positions 274-301 (EENSANPNQDQNARRRKKKERRPRGTMQ) are disordered. The span at 287-297 (RRRKKKERRPR) shows a compositional bias: basic residues. A helical transmembrane segment spans residues 312–336 (VLGIVFFVFLIMWCPFFITNILSVL). Residues C337 and C341 are joined by a disulfide bond. At 337-347 (CEKSCNQKLME) the chain is on the extracellular side. A helical membrane pass occupies residues 348–370 (KLLNVFVWIGYVCSGINPLVYTL). An NPxxY motif; important for ligand-induced conformation changes and signaling motif is present at residues 364–368 (NPLVY). Residues 371-458 (FNKIYRRAFS…SVVSERISSV (88 aa)) lie on the Cytoplasmic side of the membrane. The PDZ-binding signature appears at 456–458 (SSV).

The protein belongs to the G-protein coupled receptor 1 family. In terms of assembly, interacts with MPDZ. Interacts with ARRB2. Interacts with MPP3; this interaction stabilizes the receptor at the plasma membrane and prevents the desensitization of the HTR2C receptor-mediated calcium response.

The protein localises to the cell membrane. In terms of biological role, G-protein coupled receptor for 5-hydroxytryptamine (serotonin). Also functions as a receptor for various drugs and psychoactive substances, including ergot alkaloid derivatives, 1-2,5,-dimethoxy-4-iodophenyl-2-aminopropane (DOI) and lysergic acid diethylamide (LSD). Ligand binding causes a conformation change that triggers signaling via guanine nucleotide-binding proteins (G proteins) and modulates the activity of downstream effectors. HTR2C is coupled to G(q)/G(11) G alpha proteins and activates phospholipase C-beta, releasing diacylglycerol (DAG) and inositol 1,4,5-trisphosphate (IP3) second messengers that modulate the activity of phosphatidylinositol 3-kinase and promote the release of Ca(2+) ions from intracellular stores, respectively. Beta-arrestin family members inhibit signaling via G proteins and mediate activation of alternative signaling pathways. Regulates neuronal activity via the activation of short transient receptor potential calcium channels in the brain, and thereby modulates the activation of pro-opiomelanocortin neurons and the release of CRH that then regulates the release of corticosterone. Plays a role in the regulation of appetite and eating behavior, responses to anxiogenic stimuli and stress. Plays a role in insulin sensitivity and glucose homeostasis. In Pan troglodytes (Chimpanzee), this protein is 5-hydroxytryptamine receptor 2C.